A 708-amino-acid chain; its full sequence is Caprin-1 (708 aa).

2 stretches are compositionally biased toward low complexity: residues 1–15 and 22–37; these read MPSA…SKSS and GSSG…APAS. The disordered stretch occupies residues 1 to 48; that stretch reads MPSATSHSGSGSKSSGPPPPSGSSGNEAGAGAAAPASQHPMTGTGAVQ. Pro2 is subject to N-acetylproline. A Phosphoserine modification is found at Ser10. A coiled-coil region spans residues 58 to 92; sequence VIDKKLRNLEKKKGKLDDYQERMNKGERLNQDQLD. Position 113 is a phosphoserine (Ser113). Residues 123-151 are a coiled coil; the sequence is KTIKKTARREQLMREEAEQKRLKTVLELQ. Residue Arg163 is modified to Omega-N-methylarginine. A disordered region spans residues 258 to 287; the sequence is EEAASAPTVEDQAAEAEPEPVEEYTEQNEV. The span at 269 to 287 shows a compositional bias: acidic residues; the sequence is QAAEAEPEPVEEYTEQNEV. A phosphoserine mark is found at Ser333 and Ser341. The interval 358–379 is G3BP1-binding; the sequence is QDLMAQMQGPYNFIQDSMLDFE. Polar residues predominate over residues 415–452; the sequence is LAQPNQVSVQPEATQVPLVSSTSEGYTASQPLYQPSHA. 4 disordered regions span residues 415–459, 473–497, 521–559, and 571–708; these read LAQP…RPQK, TDQT…GTSK, NAPV…QTEL, and YHGS…QQVN. 2 stretches are compositionally biased toward low complexity: residues 475–489 and 535–559; these read QTTA…SQPQ and QQNQ…QTEL. The span at 572–603 shows a compositional bias: polar residues; the sequence is HGSQDQPHQVTGNHQQPPQQNTGFPRSNQPYY. Tyr623 carries the phosphotyrosine modification. 2 positions are modified to omega-N-methylarginine: Arg624 and Arg631. Phosphotyrosine occurs at positions 634 and 637. The residue at position 638 (Arg638) is an Omega-N-methylarginine. A compositionally biased stretch (polar residues) spans 640–656; that stretch reads SFSTNTPNSGYTQSQFS. 2 O-linked (GlcNAc) serine glycosylation sites follow: Ser642 and Ser648. Phosphotyrosine occurs at positions 650, 661, 664, and 669. Low complexity-rich tracts occupy residues 675–685 and 696–708; these read RGSGQSGPRGA and NRGM…QQVN. Arg697 is modified (asymmetric dimethylarginine; alternate). Arg697 is subject to Omega-N-methylarginine; alternate.

The protein belongs to the caprin family. As to quaternary structure, may form homomultimers. Interacts with G3BP1; interaction is direct and promotes stress granule formation. Interacts with G3BP2; interaction is direct and promotes stress granule formation. Interacts with PQBP1. Interacts with DDX3X. Interacts (when phosphorylated by EPHA4) with FMR1; interaction with FMR1 promotes formation of a membraneless compartment. In terms of processing, tyrosine phosphorylation by EPHA4 promotes interaction with FMR1 and liquid-liquid phase separation (LLPS) for the formation of a membraneless compartment that concentrates mRNAs with associated regulatory factors. O-glycosylated (O-GlcNAcylated), in a cell cycle-dependent manner. O-glycosylation by OGT inhibit ability to undergo liquid-liquid phase separation (LLPS).

The protein resides in the cytoplasm. Its subcellular location is the cytoplasmic ribonucleoprotein granule. It localises to the cytosol. It is found in the cell projection. The protein localises to the dendrite. The protein resides in the lamellipodium. Its activity is regulated as follows. Ability to mediate liquid-liquid phase separation is regulated by ATP: moderate concentrations of ATP enhance phase separation, whereas high concentrations of ATP lead to inhibition of phase separation. In terms of biological role, mRNA-binding protein that acts as a regulator of mRNAs transport, translation and/or stability, and which is involved in neurogenesis, synaptic plasticity in neurons and cell proliferation and migration in multiple cell types. Plays an essential role in cytoplasmic stress granule formation. Acts as an mRNA regulator by mediating formation of some phase-separated membraneless compartment: undergoes liquid-liquid phase separation upon binding to target mRNAs, leading to assemble mRNAs into cytoplasmic ribonucleoprotein granules that concentrate mRNAs with associated regulatory factors. Undergoes liquid-liquid phase separation following phosphorylation and interaction with FMR1, promoting formation of cytoplasmic ribonucleoprotein granules that concentrate mRNAs with factors that inhibit translation and mediate deadenylation of target mRNAs. In these cytoplasmic ribonucleoprotein granules, CAPRIN1 mediates recruitment of CNOT7 deadenylase, leading to mRNA deadenylation and degradation. Binds directly and selectively to MYC and CCND2 mRNAs. In neuronal cells, directly binds to several mRNAs associated with RNA granules, including BDNF, CAMK2A, CREB1, MAP2, NTRK2 mRNAs, as well as to GRIN1 and KPNB1 mRNAs, but not to rRNAs. The sequence is that of Caprin-1 (CAPRIN1) from Bos taurus (Bovine).